A 261-amino-acid polypeptide reads, in one-letter code: Trifolitoxin immunity protein (261 aa).

Functionally, required for TFX resistance. The protein is Trifolitoxin immunity protein (tfxG) of Rhizobium leguminosarum bv. trifolii.